Here is a 678-residue protein sequence, read N- to C-terminus: MPPSKGLNGKLEKPKHALQAIVLSDSYNYRFRPLTLDKPRCLLPLANTPLIEYTFEFLALAGVQEVYVFCCAHAGQIREYIEKSKWNLPSSPFSVNTIVSRESLSVGDALRELDSKQLITSDFILVSGDVVSNVPLNEVLKEHRKRREDDKNAIMTMVVREASPFHRTRARTESSVFVIDKKTSQCVHYQANERGKHYVSMDPEIFNEHEELEVRNDLIDCQIDICSNDVPALFTENFDYQDIRKDFVYGVLTSDLLGKKIHCHVAKENYAARVRSLQTYDAISKDVLSRWVYPFVPDSNLLNQTFSYQRHQIYKEEDVVLARSCIIKARTLIGAYTKVGDASVVANTIIGRNCTIGSNCSIDSAFLWEDVVIGDNCRIGKAILANSVKIGNNCSIEDGAIVAAGVVIGDNTIIEKNKRLTTFESHSQGTLNDPSLVGIGGRGQEYHAEEDSDDEGEFMEASGLIESTNELHLSDSESSETSSSSEEDMEFIPFSARRDSANTINSEDFDEGDFNKEAQQSLERAFEENHQIDIAALELNTLRMAMNANYHEVRSAIVLALLRRIMHLDVSPKEALAKVMTRWGPLLAKLTFSHEEQVDNVLTLQKYCVRLSMTRHFLQLLGYFYQLEIAEENAIQEWYSDPRSSEGELAALRDAGGKQFVDWLNTAESESESEEGSE.

Residue Thr-172 is modified to Phosphothreonine. Residues 467–489 (STNELHLSDSESSETSSSSEEDM) are disordered. Ser-500 is subject to Phosphoserine. Thr-503 bears the Phosphothreonine mark. Ser-506 carries the post-translational modification Phosphoserine. A W2 domain is found at 508–674 (DFDEGDFNKE…NTAESESESE (167 aa)).

This sequence belongs to the eIF-2B gamma/epsilon subunits family. In terms of assembly, component of the translation initiation factor 2B (eIF2B) complex which is a heterodecamer of two sets of five different subunits: alpha, beta, gamma, delta and epsilon. Subunits alpha, beta and delta comprise a regulatory subcomplex and subunits epsilon and gamma comprise a catalytic subcomplex. Within the complex, the hexameric regulatory complex resides at the center, with the two heterodimeric catalytic subcomplexes bound on opposite sides.

It localises to the cytoplasm. Its subcellular location is the cytosol. In terms of biological role, acts as a component of the translation initiation factor 2B (eIF2B) complex, which catalyzes the exchange of GDP for GTP on the eukaryotic initiation factor 2 (eIF2) complex gamma subunit. Its guanine nucleotide exchange factor activity is repressed when bound to eIF2 complex phosphorylated on the alpha subunit, thereby limiting the amount of methionyl-initiator methionine tRNA available to the ribosome and consequently global translation is repressed. In Schizosaccharomyces pombe (strain 972 / ATCC 24843) (Fission yeast), this protein is Translation initiation factor eIF2B subunit epsilon (tif225).